Reading from the N-terminus, the 287-residue chain is Outer membrane protein TP0453 (287 aa).

A signal peptide spans 1 to 24; it reads MIRRRYRGCTQGAWIVSVGMLFAS. Cys25 carries the N-palmitoyl cysteine lipid modification. Cys25 is lipidated: S-diacylglycerol cysteine. 9 amphipathic helix regions span residues 36-40, 56-63, 69-77, 103-112, 155-162, 172-179, 194-202, 240-250, and 270-279; these read PLGVV, ENLISRII, KADIKKIVD, YAFTNLIFSR, MSKMLSRL, PRFEKECT, GGHFITKLL, FPIQFLISRVL, and AERLASVISS.

As to quaternary structure, a mix of monomer and dimers; may integrate into the membrane as a dimer. In terms of processing, palmitoylated upon expression of a fusion protein with first 46 residues fused to PhoA in E.coli.

Its subcellular location is the cell outer membrane. Might be involved in ligand transport, alters membrane permeability at acidic pH (4.0 to 5.5). Incubation of the non-lipidated form with lipid vesicles increases their permeability. The chain is Outer membrane protein TP0453 from Treponema pallidum (strain Nichols).